The following is a 443-amino-acid chain: MNFMVLPPEVNSARIYAGAGPAPMLAAAVAWDGLAAELGMAAASFSLLISGLTAGPGSAWQGPAAAAMAAAAAPYLSWLNAATARAEGAAAGAKAAAAVYEAARAATAHPALVAANRNQLLSLVLSNLFGQNLPAIAATEASYEQLWAQDVAAMVGYHGGASTVASQLTPWQQLLSVLPPVVTAAPAGAVGVPAALAIPALGVENIGVGNFLGIGNIGNNNVGSGNTGDYNFGIGNIGNANLGNGNIGNANLGSGNAGFFNFGNGNDGNTNFGSGNAGFLNIGSGNEGSGNLGFGNAGDDNTGWGNSGDTNTGGFNSGDLNTGIGSPVTQGVANSGFGNTGTGHSGFFNSGNSGSGFQNLGNGSSGFGNASDTSSGFQNAGTALTRASSTWADSPRAWPIRAPSRLQVWRTRATTARECSIRVIISRVSSTGAPPQKKVGNSG.

Helical transmembrane passes span I15–A35, L38–S58, A59–L79, and V181–L201. Residues N231–T270 form a 4 X 10 AA approximate repeats region.

The protein belongs to the mycobacterial PPE family.

The protein localises to the cell membrane. This is an uncharacterized protein from Mycobacterium tuberculosis (strain ATCC 25618 / H37Rv).